Here is an 88-residue protein sequence, read N- to C-terminus: Large ribosomal subunit protein bL27 (88 aa).

Residues 1-21 (MAHKKGASSSRNGRDSNAQRL) form a disordered region. Residues 7-19 (ASSSRNGRDSNAQ) show a composition bias toward polar residues.

The protein belongs to the bacterial ribosomal protein bL27 family.

This Frankia casuarinae (strain DSM 45818 / CECT 9043 / HFP020203 / CcI3) protein is Large ribosomal subunit protein bL27.